The sequence spans 118 residues: Large ribosomal subunit protein uL18 (118 aa).

The protein belongs to the universal ribosomal protein uL18 family. Part of the 50S ribosomal subunit; part of the 5S rRNA/L5/L18/L25 subcomplex. Contacts the 5S and 23S rRNAs.

This is one of the proteins that bind and probably mediate the attachment of the 5S RNA into the large ribosomal subunit, where it forms part of the central protuberance. This is Large ribosomal subunit protein uL18 from Rickettsia conorii (strain ATCC VR-613 / Malish 7).